Consider the following 431-residue polypeptide: Putative transcription factor R429 (431 aa).

Residues N28–D95 adopt a coiled-coil conformation. A disordered region spans residues S142–K187. A compositionally biased stretch (low complexity) spans Q143–N152. Over residues Q170–G181 the composition is skewed to polar residues. The segment at C218–C241 is a zinc-finger region.

Belongs to the nucleo-cytoplasmic large DNA viruses (NCLDVs) VLTF-3 family.

Its function is as follows. Putative transcription factor. This chain is Putative transcription factor R429, found in Acanthamoeba polyphaga (Amoeba).